Consider the following 95-residue polypeptide: UPF0235 protein MS0322 (95 aa).

The protein belongs to the UPF0235 family.

In Mannheimia succiniciproducens (strain KCTC 0769BP / MBEL55E), this protein is UPF0235 protein MS0322.